The chain runs to 103 residues: Translation initiation factor 1A (103 aa).

The region spanning T11–T86 is the S1-like domain.

This sequence belongs to the eIF-1A family.

In terms of biological role, seems to be required for maximal rate of protein biosynthesis. Enhances ribosome dissociation into subunits and stabilizes the binding of the initiator Met-tRNA(I) to 40 S ribosomal subunits. This is Translation initiation factor 1A (eIF1A) from Methanococcus maripaludis (strain C5 / ATCC BAA-1333).